A 793-amino-acid polypeptide reads, in one-letter code: DnaJ homolog subfamily C member 10 (793 aa).

A signal peptide spans 1–32 (MGVWLNRDEFIRDVKRISLCLLVLYVVIVVGT). A J domain is found at 35 to 100 (NFYSLLGVSK…DLRKKYDKYG (66 aa)). The Thioredoxin 1 domain occupies 130 to 232 (EIITLERREF…ESLVSFAMQH (103 aa)). Residues C158 and C161 are joined by a disulfide bond. 2 trxb regions span residues 235–350 (TTVT…LPDF) and 348–463 (PDFE…PQNF). 3 consecutive Thioredoxin domains span residues 454–553 (HVTT…IEDL), 557–665 (SVVS…SWGL), and 671–776 (ASID…ALIY). A disulfide bond links C480 and C483. N530 carries N-linked (GlcNAc...) asparagine glycosylation. 2 disulfide bridges follow: C588–C591 and C700–C703. The Prevents secretion from ER motif lies at 790–793 (KDEL).

In terms of assembly, interacts with HSPA5 (via its J domain). Interacts with EDEM1.

It is found in the endoplasmic reticulum lumen. Its function is as follows. Endoplasmic reticulum disulfide reductase involved both in the correct folding of proteins and degradation of misfolded proteins. Required for efficient folding of proteins in the endoplasmic reticulum by catalyzing the removal of non-native disulfide bonds formed during the folding of proteins, such as LDLR. Also involved in endoplasmic reticulum-associated degradation (ERAD) by reducing incorrect disulfide bonds in misfolded glycoproteins recognized by EDEM1. Interaction with HSPA5 is required its activity, not for the disulfide reductase activity, but to facilitate the release of DNAJC10 from its substrate. Promotes apoptotic signaling pathway in response to endoplasmic reticulum stress. The polypeptide is DnaJ homolog subfamily C member 10 (Dnajc10) (Rattus norvegicus (Rat)).